The sequence spans 797 residues: Sodium/hydrogen exchanger 4 (797 aa).

At 1 to 13 (MGPAMFMAFRLWN) the chain is on the cytoplasmic side. Residues 14 to 28 (WLLLLAVLTRSEATS) constitute an intramembrane region (name=A/M1). Over 29–69 (YVNESSNPTAQQAPDARFAASSSDPDEGISVFELDYDYVQI) the chain is Cytoplasmic. Residues 32 to 52 (ESSNPTAQQAPDARFAASSSD) are disordered. Positions 70-90 (PYEVTLWILLASLAKIGFHLY) form an intramembrane region, name=B/M2. Residues 91-94 (HRLP) are Cytoplasmic-facing. Residues 95–114 (HLMPESCLLIIVGALVGGII) form a helical membrane-spanning segment. Residues 115–127 (FGTHHKSPPVMDS) lie on the Extracellular side of the membrane. A helical transmembrane segment spans residues 128 to 148 (SIYFLYLLPPIVLESGYFMPT). At 149 to 154 (RPFFEN) the chain is on the cytoplasmic side. A helical membrane pass occupies residues 155 to 175 (IGSILWWAGLGALINAFGIGL). Residues 176–194 (SLYFICQIKAFGLGDINLL) lie on the Extracellular side of the membrane. The chain crosses the membrane as a helical span at residues 195–215 (HNLLFGSLISAVDPVAVLAVF). Residues 216-226 (EEARVNEQLYM) are Cytoplasmic-facing. Residues 227 to 247 (MIFGEALLNDGISVVLYNILI) traverse the membrane as a helical segment. Topologically, residues 248 to 270 (AFTKMHKFEDIEAVDILAGCARF) are extracellular. A helical transmembrane segment spans residues 271-291 (VIVGCGGVFFGIIFGFISAFI). The Cytoplasmic portion of the chain corresponds to 292 to 304 (TRFTQNISAIEPL). The helical transmembrane segment at 305 to 325 (IVFMFSYLSYLAAETLYLSGI) threads the bilayer. The Extracellular segment spans residues 326–352 (LAITACAVTMKKYVEENVSQTSYTTIK). N-linked (GlcNAc...) asparagine glycosylation is present at asparagine 342. A helical transmembrane segment spans residues 353-373 (YFMKMLSSVSETLIFIFMGVS). The Cytoplasmic segment spans residues 374–384 (TIGKNHEWNWA). Residues 385–405 (FICFTLLFCQIWRAISVFTLF) form a helical membrane-spanning segment. Topologically, residues 406-420 (YVSNQFRTFPFSIKD) are extracellular. The segment at residues 421-441 (QFIIFYSGVRGAGSFSLAFLL) is an intramembrane region (name=L). Over 442 to 450 (PLSLFPRKK) the chain is Extracellular. The chain crosses the membrane as a helical span at residues 451 to 471 (LFVTATLVVTYFTVFFQGITI). Residues 472–797 (GPLVRYLDVR…KSHSPLLHRK (326 aa)) are Cytoplasmic-facing. Acidic residues predominate over residues 759–769 (YDSGEQTEEET). Residues 759–797 (YDSGEQTEEETSAILSRWTAEHRHSTEHHKSHSPLLHRK) form a disordered region. Residues 783–797 (STEHHKSHSPLLHRK) show a composition bias toward basic residues.

It belongs to the monovalent cation:proton antiporter 1 (CPA1) transporter (TC 2.A.36) family. Homodimer; each protomer has one site for sodium and one site for proton binding. Interacts with CHP1 and CHP2. In terms of processing, may be phosphorylated. In terms of tissue distribution, expressed in kidney. Expressed in uterus and endometrial epithelial cells. Expressed in the inner segments of inner medullary collecting ducts (IMCD) in kidney. Expressed in AGTR1-positive neurons in organum vasculosum of the lamina terminalis (at protein level).

Its subcellular location is the basolateral cell membrane. The protein resides in the apical cell membrane. It localises to the zymogen granule membrane. It catalyses the reaction Na(+)(in) + H(+)(out) = Na(+)(out) + H(+)(in). The enzyme catalyses Na(+)(out) + NH4(+)(in) = Na(+)(in) + NH4(+)(out). Its activity is regulated as follows. Up-regulated in response to high extracellular sodium concentration. In terms of biological role, electroneutral antiporter that exchanges sodium for protons or ammonium ions at the basolateral membrane of epithelia to regulate cell volume and intracellular pH upon hypertonic conditions. As part of transcellular ammonia transport in renal tubules, mediates basolateral ammonium extrusion in the medullary thick ascending limb, regulating the corticopapillary ammonium gradient and overall renal acid excretion. Mediates sodium:proton exchange in gastric parietal cells secondary to cAMP-dependent acid secretion and hyperosmolarity. Possibly coupled to chloride:bicarbonate antiporter, enables loading of parietal cells with sodium and chloride ions to maintain cell volume and normal gastric acid secretion. Functions as a sodium sensor in neurons of organum vasculosum of the lamina terminalis where it regulates water intake in response to increased sodium concentration in body fluids. This Mus musculus (Mouse) protein is Sodium/hydrogen exchanger 4 (Slc9a4).